The sequence spans 204 residues: Cold and drought-regulated protein CORA (204 aa).

Tandem repeats lie at residues 54 to 59 (YNHGGG), 65 to 70 (YNHGGG), 71 to 76 (YNHGGG), 78 to 83 (YHNGGG), 85 to 90 (YNHGGG), 98 to 100 (HGG), 101 to 103 (HGG), 112 to 114 (HGG), 115 to 117 (HGG), 126 to 128 (HGG), 129 to 131 (HGG), 164 to 169 (YNHGGG), 171 to 176 (YNHGGG), 178 to 180 (HGG), 181 to 183 (HGG), 184 to 186 (HGG), 187 to 189 (HGG), and 190 to 192 (HGG). The interval 54-176 (YNHGGGYNGG…GGGGYNHGGG (123 aa)) is 7 X 6 AA repeats of Y-N-H-G-G-G. Residues 98–192 (HGGHGGGGYN…GHGGHGGHGG (95 aa)) form an 11 X 3 AA repeats of H-G-G region. The span at 169–194 (GGYNHGGGGHGGHGGHGGHGGHGGHG) shows a compositional bias: gly residues. Residues 169–204 (GGYNHGGGGHGGHGGHGGHGGHGGHGAVQTEDNTQN) form a disordered region.

This sequence belongs to the GRP family.

May be involved in resistance of the plant to environmental stress. This chain is Cold and drought-regulated protein CORA (CORA), found in Medicago sativa (Alfalfa).